The chain runs to 321 residues: Cytochrome c biogenesis protein CcsA (321 aa).

8 helical membrane passes run 9-29 (ILTH…LMNL), 44-64 (GMIA…IYSG), 71-91 (LYES…VPYF), 98-118 (FSAI…SGLL), 143-163 (MLLS…LLVI), 225-245 (VISL…VWAN), 252-272 (WNWD…AIYL), and 286-306 (AIVA…VNLL).

This sequence belongs to the CcmF/CycK/Ccl1/NrfE/CcsA family. May interact with Ccs1.

It is found in the plastid. The protein localises to the chloroplast thylakoid membrane. Its function is as follows. Required during biogenesis of c-type cytochromes (cytochrome c6 and cytochrome f) at the step of heme attachment. This is Cytochrome c biogenesis protein CcsA from Acorus calamus var. americanus (American sweet flag).